Consider the following 558-residue polypeptide: Factor VII-activating protease (558 aa).

Positions 1 to 23 (MFARMSDLHVLLLMVLAGKTAFG) are cleaved as a signal peptide. Asn54 carries N-linked (GlcNAc...) asparagine glycosylation. EGF-like domains lie at 71–107 (EDDPCLSNPCTHGGDCLVSGATFTCRCPDPFSGNRCQ), 109–146 (VQNKCKNNPCGRGDCLITQSPPYHRCACKHPYRGSDCS), and 148–186 (VVPVCRPNPCQNGGTCSRQRRRSKFTCACPDQFKGKLCE). Intrachain disulfides connect Cys75-Cys86, Cys80-Cys95, Cys97-Cys106, Cys113-Cys123, Cys118-Cys134, Cys136-Cys145, Cys152-Cys163, Cys157-Cys174, Cys176-Cys185, Cys192-Cys274, Cys213-Cys255, Cys244-Cys269, Cys299-Cys433, Cys345-Cys361, Cys353-Cys422, Cys445-Cys513, Cys475-Cys491, and Cys503-Cys531. Positions 191–274 (DCYVDDGYSY…KWEYCDVPAC (84 aa)) constitute a Kringle domain. The region spanning 312 to 553 (IFGGFKSTAG…FLTWIKATME (242 aa)) is the Peptidase S1 domain. Catalysis depends on charge relay system residues His360 and Asp409. Catalysis depends on Ser507, which acts as the Charge relay system.

It belongs to the peptidase S1 family. Heterodimer; disulfide-linked. Heterodimer of a 50 kDa heavy and a 27 kDa light chain linked by a disulfide bond. Proteolytic cleavage at Gly-23 or Leu-27 can give rise to the 50 kDa heavy chain (HC) and cleavage at Arg-311 or Lys-317 can give rise to the 27 kDa light chain (LC). The HC can undergo further proteolytic cleavage giving rise to a 26 kDa fragment. The LC can undergo further proteolytic cleavage at Arg-311 leading to a 17-kDa fragment and at Arg-478 leading to a 8-kDa fragment.

The protein resides in the secreted. In terms of biological role, cleaves the alpha-chain at multiple sites and the beta-chain between 'Lys-53' and 'Lys-54' but not the gamma-chain of fibrinogen and therefore does not initiate the formation of the fibrin clot and does not cause the fibrinolysis directly. It does not cleave (activate) prothrombin and plasminogen but converts the inactive single chain urinary plasminogen activator (pro-urokinase) to the active two chain form. Activates coagulation factor VII. May function as a tumor suppressor negatively regulating cell proliferation and cell migration. In Bos taurus (Bovine), this protein is Factor VII-activating protease (HABP2).